A 1356-amino-acid chain; its full sequence is Kinesin-like protein KIF24 (1356 aa).

Residues 1-64 form the SAM domain; that stretch reads MASWLYECLC…FQLIKIIKIM (64 aa). The tract at residues 93-119 is disordered; it reads GPRRQLHFDSPSASKDKMANNETGSLS. Position 102 is a phosphoserine (serine 102). A Kinesin motor domain is found at 218–541; the sequence is KIRVCVRKRP…LRYADRVKEL (324 aa). Residue 308-315 coordinates ATP; that stretch reads GQTGAGKT. At serine 473 the chain carries Phosphoserine. The interaction with MPHOSPH9 stretch occupies residues 473–702; that stretch reads SLLALKECIR…PTRGKKVQPV (230 aa). The segment covering 552-571 has biased composition (polar residues); that stretch reads TSQNQTSANASPKRIQSSPV. Disordered stretches follow at residues 552–581, 597–664, 788–840, 897–947, and 964–998; these read TSQN…CSPK, PTKV…LCSE, EGRL…STAL, RGAL…HQKP, and VPEQ…DQRD. A Phosphoserine modification is found at serine 579. Threonine 615 is subject to Phosphothreonine; by NEK2. Serine 616 carries the post-translational modification Phosphoserine; by NEK2. Phosphoserine occurs at positions 640, 817, and 820. The segment covering 640–653 has biased composition (basic residues); sequence SPRKGTTRSGHSIK. Over residues 810 to 821 the composition is skewed to acidic residues; it reads QAEDLDDSDFSE. Polar residues predominate over residues 830-840; that stretch reads QPAMKQGSTAL. Polar residues predominate over residues 970–979; sequence GSLSSPSPEN. At serine 1008 the chain carries Phosphoserine. Positions 1109-1140 are disordered; sequence LSSSPPDNRPSGDLPALSPSPIHQHSPDKLPG.

Belongs to the TRAFAC class myosin-kinesin ATPase superfamily. Kinesin family. In terms of assembly, interacts with CCP110, CEP97, TALPID3. Interacts with MPHOSPH9. Expressed in brain, spinal cord, and small intestine.

The protein resides in the cytoplasm. Its subcellular location is the cytoskeleton. The protein localises to the microtubule organizing center. It is found in the centrosome. It localises to the centriole. Its function is as follows. Microtubule-dependent motor protein that acts as a negative regulator of ciliogenesis by mediating recruitment of CCP110 to mother centriole in cycling cells, leading to restrict nucleation of cilia at centrioles. Mediates depolymerization of microtubules of centriolar origin, possibly to suppress aberrant cilia formation. Following activation by NEK2 involved in disassembly of primary cilium during G2/M phase but does not disassemble fully formed ciliary axonemes. As cilium assembly and disassembly is proposed to coexist in a dynamic equilibrium may suppress nascent cilium assembly and, potentially, ciliar re-assembly in cells that have already disassembled their cilia ensuring the completion of cilium removal in the later stages of the cell cycle. Plays an important role in recruiting MPHOSPH9, a negative regulator of cilia formation to the distal end of mother centriole. In Mus musculus (Mouse), this protein is Kinesin-like protein KIF24 (Kif24).